Consider the following 256-residue polypeptide: Photosystem I chlorophyll a/b-binding protein 5, chloroplastic (256 aa).

A chloroplast-targeting transit peptide spans 1 to 32 (MAVVLRGGITGGFLHHRRDASSVITRRISSVK). Ala-33 is modified (N-acetylalanine). A chlorophyll b-binding site is contributed by Trp-49. The chlorophyll a site is built by Phe-69 and Glu-88. Arg-93 provides a ligand contact to chlorophyll b. 2 consecutive transmembrane segments (helical) span residues 94–113 (FAMLGVAGILFTDLLRTTGI) and 129–146 (FASTKTLIVVQFLLMGFA). Chlorophyll b contacts are provided by Glu-147 and Arg-150. Chlorophyll a is bound by residues Lys-205, Glu-206, Asn-209, Arg-211, Gln-223, and His-238. Residues 212–232 (LAMMAMLGFFVQASVTHTGPI) traverse the membrane as a helical segment.

It belongs to the light-harvesting chlorophyll a/b-binding (LHC) protein family. As to quaternary structure, the LHC complex consists of chlorophyll a-b binding proteins. Homodimer. Heterodimer with LHCA2 and, possibly, LHCA3. Can substitute to LHCA4 to form a complex with LHCA1. Binds pigments. Element of the NAD(P)H dehydrogenase-photosystem I supercomplex (NDH-PSI). Requires Binds at least 14 chlorophylls (8 Chl-a and 6 Chl-b) and carotenoids such as lutein and neoxanthin. as cofactor. In terms of processing, photoregulated by reversible phosphorylation of its threonine residues.

It localises to the plastid. Its subcellular location is the chloroplast thylakoid membrane. Functionally, the light-harvesting complex (LHC) functions as a light receptor, it captures and delivers excitation energy to photosystems with which it is closely associated. Seems involved in the function of the photosystem I in low light conditions, when other LHCA proteins are less abundant. Required, together with LHCA6, for the formation of a full-size NAD(P)H dehydrogenase-photosystem I supercomplex (NDH-PSI) that triggers cyclic and chlororespiratory electron transport in chloroplast thylakoids, especially under stress conditions (e.g. increased light intensity). The protein is Photosystem I chlorophyll a/b-binding protein 5, chloroplastic of Arabidopsis thaliana (Mouse-ear cress).